Here is a 450-residue protein sequence, read N- to C-terminus: Keratin, type I cytoskeletal 25 (450 aa).

Positions 1-23 are enriched in low complexity; that stretch reads MSLRLSSASRRSCPRPTTGSLRL. Residues 1 to 26 form a disordered region; it reads MSLRLSSASRRSCPRPTTGSLRLSGG. The head stretch occupies residues 1 to 78; that stretch reads MSLRLSSASR…VNERGLLSGN (78 aa). Positions 79-114 are coil 1A; it reads EKVTMQNLNDRLASYLDSVHALEEANADLEQKIKGW. The IF rod domain occupies 79–394; sequence EKVTMQNLND…LLIGGDDGAC (316 aa). Positions 115–136 are linker 1; it reads YEKFGPGSCRGLDHDYSRYFPI. Positions 137–228 are coil 1B; it reads IDDLKNQIIA…KNHKEEMQVL (92 aa). Residues 229 to 251 form a linker 12 region; sequence QCAAGGNVNVEMNAAPGVDLTVL. The coil 2 stretch occupies residues 252 to 390; that stretch reads LNNMRAEYEA…ETYCLLIGGD (139 aa). Positions 391–450 are tail; sequence DGACKSGGYKSKDYGSGNVGSQVKDSAKAIVVKKVLEEVDQRSKILTTRLRSLEEKSQSN. Ser-442 bears the Phosphoserine mark.

The protein belongs to the intermediate filament family. In terms of assembly, heterodimer of a type I and a type II keratin. Heterodimer with type II keratin KRT5 leading to the formation of keratin intermediate filament (KIF) network. Interacts with KRT6A to form filaments.

Its subcellular location is the cytoplasm. Essential for the proper assembly of type I and type II keratin protein complexes and formation of keratin intermediate filaments in the inner root sheath (irs). Plays a role in the cytoskeleton organization. This chain is Keratin, type I cytoskeletal 25 (KRT25), found in Pan troglodytes (Chimpanzee).